A 441-amino-acid polypeptide reads, in one-letter code: ATP-dependent protease ATPase subunit HslU (441 aa).

Residues isoleucine 18, 60–65, aspartate 254, glutamate 319, and arginine 391 each bind ATP; that span reads GVGKTE.

It belongs to the ClpX chaperone family. HslU subfamily. As to quaternary structure, a double ring-shaped homohexamer of HslV is capped on each side by a ring-shaped HslU homohexamer. The assembly of the HslU/HslV complex is dependent on binding of ATP.

The protein resides in the cytoplasm. In terms of biological role, ATPase subunit of a proteasome-like degradation complex; this subunit has chaperone activity. The binding of ATP and its subsequent hydrolysis by HslU are essential for unfolding of protein substrates subsequently hydrolyzed by HslV. HslU recognizes the N-terminal part of its protein substrates and unfolds these before they are guided to HslV for hydrolysis. In Shewanella piezotolerans (strain WP3 / JCM 13877), this protein is ATP-dependent protease ATPase subunit HslU.